The primary structure comprises 540 residues: Chaperonin GroEL (540 aa).

Residues 29–32 (TLGP), 86–90 (DGTTT), Gly-413, 477–479 (DAL), and Asp-493 contribute to the ATP site.

The protein belongs to the chaperonin (HSP60) family. Forms a cylinder of 14 subunits composed of two heptameric rings stacked back-to-back. Interacts with the co-chaperonin GroES.

Its subcellular location is the cytoplasm. It carries out the reaction ATP + H2O + a folded polypeptide = ADP + phosphate + an unfolded polypeptide.. Together with its co-chaperonin GroES, plays an essential role in assisting protein folding. The GroEL-GroES system forms a nano-cage that allows encapsulation of the non-native substrate proteins and provides a physical environment optimized to promote and accelerate protein folding. This chain is Chaperonin GroEL, found in Clostridium botulinum (strain Eklund 17B / Type B).